The sequence spans 1235 residues: MGLNIPPKPESSLWTDDQWKAIQAEGNNVLVAAAAGSGKTAVLVTRIIEKLINESANLNVDELLIVTFTNASAAEMKFRIGKGLEEALAQNPDSTHLKRQVALLNYASISTLHSFCLEIIRKYYFDADIDPNFRLIEPIESSMIRDEVLENLLEQEYSIENNEPFFHLVESFTGDRSDAELHALISKLYDFSRANPDPNIWLEEMVDFYNTEETTSITELPYFPIIKEDIELRVNQAKNYLLNAIDYANENNGPVPYLATLENDLAQIEAITELSWNSWGQLKKAIESIDFKRIPTLKNKSDYDEEYVEEAKKFRDAAKKEIKNIATDWFSREEINYLSDLEKMKPDIKTLSRLVKKFAENFFEEKQQRGVLDFNDLEHLALKILLKDNEASEVAKNYQKQFKEVLIDEYQDTNMVQETILRLVTNSGEEQGNLFMVGDVKQSIYRFRLAEPTLFMTKYQTYQQDGNGSGIRIDLSQNFRSRKEVLDATNFIFHQLMDKHIAEIDYDAAAELTLGASFPETTDMATELLLIDMKSVESETEDELSPQELQKNQVESRAIAMKIKEMIDNKFPIFDKKMKQNRPIQYRDIVILARAMTSAPDMEEAMKVQDIPFYANNNSGYFETTEVATMIALMKVIDNPYQDIPLAAVLRSPIIGLNEEELGQVRMAKKNGYFYDALLTYKDTTVSETADKMSDFIQQLNNWRELSIRENLTSLIWQIYQETNFYEFVGGLPGGKQRQANLRALYDRANQYEKTSFRGLFRFVRFVERLEVRGDDLGTAKTLGEKEDVVRMMTIHASKGLEFPVVIVSGLSRKFNMRDIYSKTLLDKDYGFASNYRDIEKMIVYPTIMQQAMKQKKSREMIAEEMRVLYVALTRAEEKLILTATVPDFEKTSKNWLQVAKEKETILPASTRAKAKCYLDWIGNATIRHPNFKELLCEEMIQTLPTDMKLQIEIKTKEMFLTNELEKTETVNWLENIKEHQPIPVKSPYKDEIQRYMNYEYQNEEATEIRAKQSVTELKRQFSLQDSWSDTTLLKEFQKVSLDRPKFLQQNKLSATEIGTAMHTLMQAVSLEHQPTKEDLEQLLQTMREKDILTEAQLKAINIKQVLGFFESQLGKTMLQKKDLVKREVPFSYLLPVSELYEKVDIDERVLIQGVVDSMIEEEETITLIDYKTDKIEGRYSNWEAAEKIMKERYHIQIKLYAKAIQAISGKKVDAAYLYFFDGQHICQINTKEGF.

The region spanning Ser12–Arg482 is the UvrD-like helicase ATP-binding domain. Ala33–Thr40 is a binding site for ATP. Residues Ala509–Gly800 enclose the UvrD-like helicase C-terminal domain.

It belongs to the helicase family. AddA subfamily. In terms of assembly, heterodimer of AddA and AddB/RexB. The cofactor is Mg(2+).

The catalysed reaction is Couples ATP hydrolysis with the unwinding of duplex DNA by translocating in the 3'-5' direction.. It catalyses the reaction ATP + H2O = ADP + phosphate + H(+). The heterodimer acts as both an ATP-dependent DNA helicase and an ATP-dependent, dual-direction single-stranded exonuclease. Recognizes the chi site generating a DNA molecule suitable for the initiation of homologous recombination. The AddA nuclease domain is required for chi fragment generation; this subunit has the helicase and 3' -&gt; 5' nuclease activities. This Listeria monocytogenes serotype 4b (strain F2365) protein is ATP-dependent helicase/nuclease subunit A.